Consider the following 87-residue polypeptide: Translation initiation factor IF-1 2 (87 aa).

Residues M1–K72 enclose the S1-like domain.

It belongs to the IF-1 family. Component of the 30S ribosomal translation pre-initiation complex which assembles on the 30S ribosome in the order IF-2 and IF-3, IF-1 and N-formylmethionyl-tRNA(fMet); mRNA recruitment can occur at any time during PIC assembly.

The protein localises to the cytoplasm. In terms of biological role, one of the essential components for the initiation of protein synthesis. Stabilizes the binding of IF-2 and IF-3 on the 30S subunit to which N-formylmethionyl-tRNA(fMet) subsequently binds. Helps modulate mRNA selection, yielding the 30S pre-initiation complex (PIC). Upon addition of the 50S ribosomal subunit IF-1, IF-2 and IF-3 are released leaving the mature 70S translation initiation complex. In Burkholderia vietnamiensis (strain G4 / LMG 22486) (Burkholderia cepacia (strain R1808)), this protein is Translation initiation factor IF-1 2.